Reading from the N-terminus, the 446-residue chain is Signal recognition particle 54 kDa protein (446 aa).

Residues 103 to 110 (GVQGTGKT), 185 to 189 (DTAGR), and 245 to 248 (TKMD) contribute to the GTP site.

It belongs to the GTP-binding SRP family. SRP54 subfamily. As to quaternary structure, part of the signal recognition particle protein translocation system, which is composed of SRP and FtsY. Archaeal SRP consists of a 7S RNA molecule of 300 nucleotides and two protein subunits: SRP54 and SRP19.

Its subcellular location is the cytoplasm. The enzyme catalyses GTP + H2O = GDP + phosphate + H(+). Functionally, involved in targeting and insertion of nascent membrane proteins into the cytoplasmic membrane. Binds to the hydrophobic signal sequence of the ribosome-nascent chain (RNC) as it emerges from the ribosomes. The SRP-RNC complex is then targeted to the cytoplasmic membrane where it interacts with the SRP receptor FtsY. This Metallosphaera sedula (strain ATCC 51363 / DSM 5348 / JCM 9185 / NBRC 15509 / TH2) protein is Signal recognition particle 54 kDa protein.